Here is a 194-residue protein sequence, read N- to C-terminus: dITP/XTP pyrophosphatase (194 aa).

8–13 (TNNPHK) contributes to the substrate binding site. The active-site Proton acceptor is aspartate 69. Aspartate 69 is a binding site for Mg(2+). Residues threonine 70, 150 to 153 (FGYD), lysine 173, and 178 to 179 (HR) contribute to the substrate site.

This sequence belongs to the HAM1 NTPase family. As to quaternary structure, homodimer. The cofactor is Mg(2+).

The catalysed reaction is XTP + H2O = XMP + diphosphate + H(+). It catalyses the reaction dITP + H2O = dIMP + diphosphate + H(+). The enzyme catalyses ITP + H2O = IMP + diphosphate + H(+). Its function is as follows. Pyrophosphatase that catalyzes the hydrolysis of nucleoside triphosphates to their monophosphate derivatives, with a high preference for the non-canonical purine nucleotides XTP (xanthosine triphosphate), dITP (deoxyinosine triphosphate) and ITP. Seems to function as a house-cleaning enzyme that removes non-canonical purine nucleotides from the nucleotide pool, thus preventing their incorporation into DNA/RNA and avoiding chromosomal lesions. This Porphyromonas gingivalis (strain ATCC BAA-308 / W83) protein is dITP/XTP pyrophosphatase.